A 451-amino-acid polypeptide reads, in one-letter code: Adenylyltransferase and sulfurtransferase MOCS3 (451 aa).

The disordered stretch occupies residues 42–62; that stretch reads GEDSDEAEESSNDMPTPQTKL. Residues 43–52 show a composition bias toward acidic residues; the sequence is EDSDEAEESS. Thr60 carries the phosphothreonine modification. Residues Gly99, Asp120, 127–131, Lys144, and 188–189 each bind ATP; these read SNLHR and DN. Positions 229 and 232 each coordinate Zn(2+). The active-site Glycyl thioester intermediate; for adenylyltransferase activity is Cys246. 2 residues coordinate Zn(2+): Cys304 and Cys307. The Rhodanese domain maps to 353–449; that stretch reads QSQPHLLLDV…WTGSVDATFP (97 aa). The active-site Cysteine persulfide intermediate; for sulfurtransferase activity is the Cys408.

The protein in the N-terminal section; belongs to the HesA/MoeB/ThiF family. UBA4 subfamily. It depends on Zn(2+) as a cofactor.

It is found in the cytoplasm. Its subcellular location is the cytosol. The catalysed reaction is [molybdopterin-synthase sulfur-carrier protein]-C-terminal Gly-Gly + ATP + H(+) = [molybdopterin-synthase sulfur-carrier protein]-C-terminal Gly-Gly-AMP + diphosphate. It carries out the reaction [molybdopterin-synthase sulfur-carrier protein]-C-terminal Gly-Gly-AMP + S-sulfanyl-L-cysteinyl-[cysteine desulfurase] + AH2 = [molybdopterin-synthase sulfur-carrier protein]-C-terminal-Gly-aminoethanethioate + L-cysteinyl-[cysteine desulfurase] + A + AMP + 2 H(+). Its pathway is tRNA modification; 5-methoxycarbonylmethyl-2-thiouridine-tRNA biosynthesis. It functions in the pathway cofactor biosynthesis; molybdopterin biosynthesis. In terms of biological role, plays a central role in 2-thiolation of mcm(5)S(2)U at tRNA wobble positions of cytosolic tRNA(Lys), tRNA(Glu) and tRNA(Gln). Also essential during biosynthesis of the molybdenum cofactor. Acts by mediating the C-terminal thiocarboxylation of sulfur carriers URM1 and MOCS2A. Its N-terminus first activates URM1 and MOCS2A as acyl-adenylates (-COAMP), then the persulfide sulfur on the catalytic cysteine is transferred to URM1 and MOCS2A to form thiocarboxylation (-COSH) of their C-terminus. The reaction probably involves hydrogen sulfide that is generated from the persulfide intermediate and that acts as a nucleophile towards URM1 and MOCS2A. Subsequently, a transient disulfide bond is formed. Does not use thiosulfate as sulfur donor; NFS1 probably acting as a sulfur donor for thiocarboxylation reactions. This is Adenylyltransferase and sulfurtransferase MOCS3 from Drosophila persimilis (Fruit fly).